We begin with the raw amino-acid sequence, 365 residues long: Ribosome biogenesis regulatory protein homolog (365 aa).

Met-1 carries the post-translational modification N-acetylmethionine. Ser-5 is modified (phosphoserine). Residues Lys-154 and Lys-226 each participate in a glycyl lysine isopeptide (Lys-Gly) (interchain with G-Cter in SUMO2) cross-link. The disordered stretch occupies residues 200–255; sequence QMPSSAGLHPTGHQSKEELGRAMQVAKVSTASVGRFQERLPKEKAPRGSGKKRKFQ. A compositionally biased stretch (basic and acidic residues) spans 235–245; the sequence is FQERLPKEKAP. Residue Lys-266 forms a Glycyl lysine isopeptide (Lys-Gly) (interchain with G-Cter in SUMO2) linkage. Residues 272–365 form a disordered region; it reads LRVMNSKKPQ…VPHHGGKRRK (94 aa). Citrulline is present on Arg-273. 2 stretches are compositionally biased toward basic residues: residues 302–325 and 340–365; these read KRRKMSQKGKKKGGRQGPSGRRKG and GKKHSRPPALGGKKKGVPHHGGKRRK.

The protein belongs to the RRS1 family. As to quaternary structure, component of a hexameric 5S RNP precursor complex, composed of 5S RNA, RRS1, RPF2/BXDC1, RPL5, RPL11 and HEATR3; this complex acts as a precursor for ribosome assembly. In terms of processing, citrullinated by PADI4.

It localises to the nucleus. The protein localises to the nucleolus. Functionally, involved in ribosomal large subunit assembly. May regulate the localization of the 5S RNP/5S ribonucleoprotein particle to the nucleolus. The protein is Ribosome biogenesis regulatory protein homolog (Rrs1) of Rattus norvegicus (Rat).